Consider the following 529-residue polypeptide: MQQRRPVRRALLSVSDKAGIVEFAQALSARGVELLSTGGTARLLAEKGLPVTEVSDYTGFPEMMDGRVKTLHPKVHGGILGRRGQDDAIMEEHQIQPIDMVVVNLYPFAQTVAREGCSLEDAVENIDIGGPTMVRSAAKNHRDVAIVVKSSDYDAIIKEMDANEGSLTLATRFNLAIKAFEHTAAYDSMIANYFGSMVPAYHGESKEAAGRFPRTLNLNFIKKQDMRYGENSHQQAAFYIEENVKEASVATATQVQGKALSYNNIADTDAALECVKEFAEPACVIVKHANPCGVAVSNSILDAYDRAYKTDPTSAFGGIIAFNRELDAETAQAIISRQFVEVIIAPSASEEALKITAAKQNVRVLICGQWGERAPGLDFKRVNGGLLVQDRDLGMVGAEELRVVTKRQPTEQELRDALFCWKVAKFVKSNAIVYAKNNMTIGIGAGQMSRVYSAKIAGIKAADEGLEVKGSSMASDAFFPFRDGIDAAAAAGVTCVIQPGGSIRDDEVIAAADEHGIAMLFTDMRHFRH.

Residues 1–148 (MQQRRPVRRA…KNHRDVAIVV (148 aa)) form the MGS-like domain. Residue lysine 287 is modified to N6-acetyllysine.

It belongs to the PurH family.

The enzyme catalyses (6R)-10-formyltetrahydrofolate + 5-amino-1-(5-phospho-beta-D-ribosyl)imidazole-4-carboxamide = 5-formamido-1-(5-phospho-D-ribosyl)imidazole-4-carboxamide + (6S)-5,6,7,8-tetrahydrofolate. The catalysed reaction is IMP + H2O = 5-formamido-1-(5-phospho-D-ribosyl)imidazole-4-carboxamide. It participates in purine metabolism; IMP biosynthesis via de novo pathway; 5-formamido-1-(5-phospho-D-ribosyl)imidazole-4-carboxamide from 5-amino-1-(5-phospho-D-ribosyl)imidazole-4-carboxamide (10-formyl THF route): step 1/1. The protein operates within purine metabolism; IMP biosynthesis via de novo pathway; IMP from 5-formamido-1-(5-phospho-D-ribosyl)imidazole-4-carboxamide: step 1/1. The sequence is that of Bifunctional purine biosynthesis protein PurH from Escherichia coli O6:K15:H31 (strain 536 / UPEC).